A 609-amino-acid polypeptide reads, in one-letter code: Autophagy-related protein 22-1 (609 aa).

The next 4 helical transmembrane spans lie at 95-115, 117-137, 151-171, and 176-196; these read YYAGGPTVVSQCVVYIFGVEI, TASFAMYTFSVSVFIQAILII, LLLVAFAVIGSVSTMLFLGVV, and MVGAVIAIIANTCFGASFVLL. The segment at 214–238 is disordered; the sequence is AREPPPALDGSRAQEGHSDTTNDID. Basic and acidic residues predominate over residues 225 to 238; sequence RAQEGHSDTTNDID. N244 carries an N-linked (GlcNAc...) asparagine glycan. The helical transmembrane segment at 287–307 threads the bilayer; the sequence is IGIGYIGAIILQIVCILVVIA. N-linked (GlcNAc...) asparagine glycosylation is present at N309. 3 helical membrane passes run 317-337, 381-401, and 415-435; these read LVLFLIGLWWFIFTIPAALWL, ILLFLAAWLLLSDGIATVSGT, and AALGLINVIAMVAGVLGAFSW. N443 is a glycosylation site (N-linked (GlcNAc...) asparagine). The next 4 helical transmembrane spans lie at 450-470, 487-509, 522-542, and 552-572; these read IIACILLFELVPLYGLLGFIP, FPLGIVYGLVMGGLSSYCRSFFG, ALYAITDKGSSIFGPAIVGII, and AFVFLAILIFLPLPLMLLVDV.

The protein belongs to the ATG22 family.

It is found in the vacuole membrane. Its function is as follows. Vacuolar effluxer which mediate the efflux of amino acids resulting from autophagic degradation. The release of autophagic amino acids allows the maintenance of protein synthesis and viability during nitrogen starvation. This chain is Autophagy-related protein 22-1 (atg22-1), found in Neosartorya fischeri (strain ATCC 1020 / DSM 3700 / CBS 544.65 / FGSC A1164 / JCM 1740 / NRRL 181 / WB 181) (Aspergillus fischerianus).